Reading from the N-terminus, the 211-residue chain is MTTLTRQDLNFGQVVADVLSEFLEVAVHLILYVREVYPIGIFQKRKKYNVPVQMSCHPELNQYIQDTLHCVKPLLEKNDVEKVVVVILDKEHHPVERFVFEITQPPLLSISSESLLSHVEQLLRAFILKISVCDAVLDNNPPGCTFTVLVHTREAATRNMEKIQVIKDFPWILADEQDVHMHDPRLIPLKTMTSDILKMQLYVEERAHKGT.

The HORMA domain maps to 13-203; it reads QVVADVLSEF…SDILKMQLYV (191 aa).

As to quaternary structure, homooligomer. Interacts with REV1. Interacts with FZR1 (in complex with the anaphase promoting complex APC). May interact with CDC20. Heterodimer with REV3L. This dimer forms the minimal DNA polymerase zeta complex (Pol-zeta2), with REV3L bearing DNA polymerase catalytic activity, although its activity is very low in this context. Component of the tetrameric Pol-zeta complex (Pol-zeta4), which consists of REV3L, MAD2L2, POLD2 and POLD3; Pol-zeta4 is the fully active form of DNA polymerase zeta. Component of the shieldin complex, consisting of SHLD1, SHLD2, SHLD3 and MAD2L2/REV7. Within the complex, SHLD2 forms a scaffold which interacts with a SHLD3-MAD2L2 subcomplex via its N-terminus, and with SHLD1 via its C-terminus.

The protein resides in the nucleus. It is found in the cytoplasm. The protein localises to the cytoskeleton. It localises to the spindle. Its subcellular location is the chromosome. Functionally, adapter protein able to interact with different proteins and involved in different biological processes. Mediates the interaction between the error-prone DNA polymerase zeta catalytic subunit REV3L and the inserter polymerase REV1, thereby mediating the second polymerase switching in translesion DNA synthesis. Translesion DNA synthesis releases the replication blockade of replicative polymerases, stalled in presence of DNA lesions. May also play a role in signal transduction in response to DNA damage. May regulate the activation of the anaphase promoting complex APC thereby regulating progression through the cell cycle. Component of the shieldin complex, which plays an important role in repair of DNA double-stranded breaks (DSBs). During G1 and S phase of the cell cycle, the complex functions downstream of TP53BP1 to promote non-homologous end joining (NHEJ) and suppress DNA end resection. Through transcriptional regulation may play a role in epithelial-mesenchymal transdifferentiation. The polypeptide is Mitotic spindle assembly checkpoint protein MAD2B (MAD2L2) (Gallus gallus (Chicken)).